We begin with the raw amino-acid sequence, 255 residues long: 3-deoxy-manno-octulosonate cytidylyltransferase (255 aa).

The protein belongs to the KdsB family.

The protein localises to the cytoplasm. The enzyme catalyses 3-deoxy-alpha-D-manno-oct-2-ulosonate + CTP = CMP-3-deoxy-beta-D-manno-octulosonate + diphosphate. It participates in nucleotide-sugar biosynthesis; CMP-3-deoxy-D-manno-octulosonate biosynthesis; CMP-3-deoxy-D-manno-octulosonate from 3-deoxy-D-manno-octulosonate and CTP: step 1/1. The protein operates within bacterial outer membrane biogenesis; lipopolysaccharide biosynthesis. Activates KDO (a required 8-carbon sugar) for incorporation into bacterial lipopolysaccharide in Gram-negative bacteria. The chain is 3-deoxy-manno-octulosonate cytidylyltransferase from Cellvibrio japonicus (strain Ueda107) (Pseudomonas fluorescens subsp. cellulosa).